The following is a 427-amino-acid chain: 3-phosphoshikimate 1-carboxyvinyltransferase (427 aa).

3-phosphoshikimate contacts are provided by lysine 20, serine 21, and arginine 25. Lysine 20 lines the phosphoenolpyruvate pocket. The phosphoenolpyruvate site is built by glycine 92 and arginine 120. Residues serine 166, glutamine 168, aspartate 312, and lysine 339 each contribute to the 3-phosphoshikimate site. Residue glutamine 168 participates in phosphoenolpyruvate binding. Aspartate 312 acts as the Proton acceptor in catalysis. Phosphoenolpyruvate-binding residues include arginine 343 and arginine 385.

Belongs to the EPSP synthase family. In terms of assembly, monomer.

Its subcellular location is the cytoplasm. It carries out the reaction 3-phosphoshikimate + phosphoenolpyruvate = 5-O-(1-carboxyvinyl)-3-phosphoshikimate + phosphate. It participates in metabolic intermediate biosynthesis; chorismate biosynthesis; chorismate from D-erythrose 4-phosphate and phosphoenolpyruvate: step 6/7. Catalyzes the transfer of the enolpyruvyl moiety of phosphoenolpyruvate (PEP) to the 5-hydroxyl of shikimate-3-phosphate (S3P) to produce enolpyruvyl shikimate-3-phosphate and inorganic phosphate. The polypeptide is 3-phosphoshikimate 1-carboxyvinyltransferase (Streptococcus gordonii (strain Challis / ATCC 35105 / BCRC 15272 / CH1 / DL1 / V288)).